The following is a 144-amino-acid chain: Large ribosomal subunit protein uL16 (144 aa).

This sequence belongs to the universal ribosomal protein uL16 family. In terms of assembly, part of the 50S ribosomal subunit.

In terms of biological role, binds 23S rRNA and is also seen to make contacts with the A and possibly P site tRNAs. In Natranaerobius thermophilus (strain ATCC BAA-1301 / DSM 18059 / JW/NM-WN-LF), this protein is Large ribosomal subunit protein uL16.